A 91-amino-acid polypeptide reads, in one-letter code: Putative regulatory protein DSY2730 (91 aa).

The protein belongs to the RemA family.

This chain is Putative regulatory protein DSY2730, found in Desulfitobacterium hafniense (strain Y51).